The following is a 237-amino-acid chain: 2,3,4,5-tetrahydropyridine-2,6-dicarboxylate N-acetyltransferase (237 aa).

The protein belongs to the transferase hexapeptide repeat family. DapH subfamily.

It catalyses the reaction (S)-2,3,4,5-tetrahydrodipicolinate + acetyl-CoA + H2O = L-2-acetamido-6-oxoheptanedioate + CoA. The protein operates within amino-acid biosynthesis; L-lysine biosynthesis via DAP pathway; LL-2,6-diaminopimelate from (S)-tetrahydrodipicolinate (acetylase route): step 1/3. In terms of biological role, catalyzes the transfer of an acetyl group from acetyl-CoA to tetrahydrodipicolinate. This is 2,3,4,5-tetrahydropyridine-2,6-dicarboxylate N-acetyltransferase from Alkaliphilus metalliredigens (strain QYMF).